The primary structure comprises 367 residues: UDP-N-acetylglucosamine--N-acetylmuramyl-(pentapeptide) pyrophosphoryl-undecaprenol N-acetylglucosamine transferase (367 aa).

UDP-N-acetyl-alpha-D-glucosamine is bound by residues 15–17 (TGG), Asn127, Arg163, Ser191, Ile249, and Gln294.

It belongs to the glycosyltransferase 28 family. MurG subfamily.

It localises to the cell inner membrane. The enzyme catalyses di-trans,octa-cis-undecaprenyl diphospho-N-acetyl-alpha-D-muramoyl-L-alanyl-D-glutamyl-meso-2,6-diaminopimeloyl-D-alanyl-D-alanine + UDP-N-acetyl-alpha-D-glucosamine = di-trans,octa-cis-undecaprenyl diphospho-[N-acetyl-alpha-D-glucosaminyl-(1-&gt;4)]-N-acetyl-alpha-D-muramoyl-L-alanyl-D-glutamyl-meso-2,6-diaminopimeloyl-D-alanyl-D-alanine + UDP + H(+). It participates in cell wall biogenesis; peptidoglycan biosynthesis. Its function is as follows. Cell wall formation. Catalyzes the transfer of a GlcNAc subunit on undecaprenyl-pyrophosphoryl-MurNAc-pentapeptide (lipid intermediate I) to form undecaprenyl-pyrophosphoryl-MurNAc-(pentapeptide)GlcNAc (lipid intermediate II). In Burkholderia orbicola (strain MC0-3), this protein is UDP-N-acetylglucosamine--N-acetylmuramyl-(pentapeptide) pyrophosphoryl-undecaprenol N-acetylglucosamine transferase.